Here is a 501-residue protein sequence, read N- to C-terminus: Cytochrome P450 90A3 (501 aa).

The helical transmembrane segment at 2–22 threads the bilayer; it reads AAAALLLLAAAAAIVVVAMVL. Cys446 serves as a coordination point for heme.

The protein belongs to the cytochrome P450 family. Heme is required as a cofactor. Highly expressed in shoot apex and inflorenscence. Expressed in roots, stems, leaf blades and leaf sheaths.

It is found in the membrane. It functions in the pathway plant hormone biosynthesis; brassinosteroid biosynthesis. Functionally, catalyzes the C23-alpha-hydroxylation step in brassinosteroid biosynthesis. Converts 6-deoxocathasterone (6-deoxoCT) to 6-deoxoteasterone (6-deoxoTE) in the late C6-oxidation pathway and cathasterone (CT) to teasterone (TE) in the early C6-oxidation pathway of brassinolide (BL) biosynthesis. This chain is Cytochrome P450 90A3, found in Oryza sativa subsp. japonica (Rice).